A 285-amino-acid chain; its full sequence is Enterobactin synthase component B (285 aa).

The isochorismatase stretch occupies residues 2-213 (AIPKLQAYAL…EELLPAPIPA (212 aa)). In terms of domain architecture, Carrier spans 209 to 284 (APIPASKAAL…AWWKLLSREV (76 aa)). 3 residues coordinate Mg(2+): Asp-227, Gly-242, and Asp-244. Residue Ser-245 is modified to O-(pantetheine 4'-phosphoryl)serine.

The protein in the N-terminal section; belongs to the isochorismatase family. In terms of assembly, proteins EntB, EntD, EntE, and EntF form a multienzyme complex called enterobactin synthase. Homodimer. Also forms a specific pairwise interaction with EntC; this interaction likely facilitates substrate channeling to connect the EntB and EntC active sites. The cofactor is Mg(2+). In terms of processing, 4'-phosphopantetheine is transferred from CoA to a specific serine of apo-EntB by EntD. Holo-EntB so formed is then acylated with 2,3-dihydroxybenzoate in a reaction catalyzed by EntE.

It is found in the cytoplasm. It carries out the reaction 3 2,3-dihydroxybenzoate + 3 L-serine + 6 ATP = enterobactin + 6 AMP + 6 diphosphate + 4 H(+). It catalyses the reaction isochorismate + H2O = (2S,3S)-2,3-dihydroxy-2,3-dihydrobenzoate + pyruvate. It participates in siderophore biosynthesis; enterobactin biosynthesis. Involved in the biosynthesis of the siderophore enterobactin (enterochelin), which is a macrocyclic trimeric lactone of N-(2,3-dihydroxybenzoyl)-serine. The serine trilactone serves as a scaffolding for the three catechol functionalities that provide hexadentate coordination for the tightly ligated iron(3+) atoms. EntB is a bifunctional protein that serves as an isochorismate lyase and an aryl carrier protein (ArCP). Catalyzes the conversion of isochorismate to 2,3-dihydro-2,3-dihydroxybenzoate (2,3-diDHB), the precursor of 2,3-dihydroxybenzoate (DHB). In the enterobactin assembly, EntB functions as an aryl carrier protein phosphopantetheinylated near the C terminus by EntD to yield holo-EntB, which is then acylated by EntE with 2,3-dihydroxybenzoyl-AMP to form DHB-holo-EntB. Then this product will serve in the formation of the amide bond between 2,3-dihydroxybenzoate (DHB) and L-serine. This chain is Enterobactin synthase component B, found in Escherichia coli O157:H7.